We begin with the raw amino-acid sequence, 142 residues long: MQHARKKFRVGRTSAHNRCMLANMLKSLIHQERIETTLPKAKELRRHADKMITLAKKNTLAARRLAVARLMIRYNKLTSKEARQAKGGDLSVYNVDRKVINKLFDELGSRFVSRNGGYTRILKMQNRVGDNARKCIIEFLAN.

The protein belongs to the bacterial ribosomal protein bL17 family. In terms of assembly, part of the 50S ribosomal subunit. Contacts protein L32.

This is Large ribosomal subunit protein bL17 from Chlamydia abortus (strain DSM 27085 / S26/3) (Chlamydophila abortus).